A 130-amino-acid polypeptide reads, in one-letter code: ATP synthase epsilon chain, chloroplastic (130 aa).

Belongs to the ATPase epsilon chain family. In terms of assembly, F-type ATPases have 2 components, CF(1) - the catalytic core - and CF(0) - the membrane proton channel. CF(1) has five subunits: alpha(3), beta(3), gamma(1), delta(1), epsilon(1). CF(0) has three main subunits: a, b and c.

It localises to the plastid. The protein localises to the chloroplast thylakoid membrane. Produces ATP from ADP in the presence of a proton gradient across the membrane. In Tupiella akineta (Green alga), this protein is ATP synthase epsilon chain, chloroplastic.